We begin with the raw amino-acid sequence, 454 residues long: tRNA modification GTPase MnmE (454 aa).

Residues Arg-23, Glu-80, and Lys-120 each contribute to the (6S)-5-formyl-5,6,7,8-tetrahydrofolate site. Positions 216–377 (GMKVVIAGRP…LRDHLKQSMG (162 aa)) constitute a TrmE-type G domain. Residue Asn-226 coordinates K(+). GTP contacts are provided by residues 226–231 (NAGKSS), 245–251 (TAIAGTT), 270–273 (DTAG), 335–338 (NKAD), and 358–360 (SAR). Mg(2+) is bound at residue Ser-230. K(+)-binding residues include Thr-245, Ile-247, and Thr-250. Thr-251 contacts Mg(2+). Lys-454 contacts (6S)-5-formyl-5,6,7,8-tetrahydrofolate.

Belongs to the TRAFAC class TrmE-Era-EngA-EngB-Septin-like GTPase superfamily. TrmE GTPase family. As to quaternary structure, homodimer. Heterotetramer of two MnmE and two MnmG subunits. It depends on K(+) as a cofactor.

It localises to the cytoplasm. Exhibits a very high intrinsic GTPase hydrolysis rate. Involved in the addition of a carboxymethylaminomethyl (cmnm) group at the wobble position (U34) of certain tRNAs, forming tRNA-cmnm(5)s(2)U34. The sequence is that of tRNA modification GTPase MnmE from Pectobacterium atrosepticum (strain SCRI 1043 / ATCC BAA-672) (Erwinia carotovora subsp. atroseptica).